The primary structure comprises 865 residues: Alanine--tRNA ligase (865 aa).

Zn(2+) is bound by residues histidine 554, histidine 558, cysteine 656, and histidine 660.

Belongs to the class-II aminoacyl-tRNA synthetase family. It depends on Zn(2+) as a cofactor.

The protein localises to the cytoplasm. It carries out the reaction tRNA(Ala) + L-alanine + ATP = L-alanyl-tRNA(Ala) + AMP + diphosphate. Functionally, catalyzes the attachment of alanine to tRNA(Ala) in a two-step reaction: alanine is first activated by ATP to form Ala-AMP and then transferred to the acceptor end of tRNA(Ala). Also edits incorrectly charged Ser-tRNA(Ala) and Gly-tRNA(Ala) via its editing domain. In Francisella philomiragia subsp. philomiragia (strain ATCC 25017 / CCUG 19701 / FSC 153 / O#319-036), this protein is Alanine--tRNA ligase.